The sequence spans 362 residues: DNA replication and repair protein RecF (362 aa).

Gly-31–Thr-38 contributes to the ATP binding site.

Belongs to the RecF family.

Its subcellular location is the cytoplasm. Functionally, the RecF protein is involved in DNA metabolism; it is required for DNA replication and normal SOS inducibility. RecF binds preferentially to single-stranded, linear DNA. It also seems to bind ATP. The chain is DNA replication and repair protein RecF from Hydrogenovibrio crunogenus (strain DSM 25203 / XCL-2) (Thiomicrospira crunogena).